A 282-amino-acid chain; its full sequence is Acyl-CoA-binding domain-containing protein 6 (282 aa).

The tract at residues 1–31 (MASSFLPAGAITGDSGGELSSGDDSGEVEFP) is disordered. The ACB domain maps to 42–127 (LAELFEKAAA…VKKLDPGWNP (86 aa)). An acyl-CoA is bound by residues 69-73 (YARYK) and Lys-95. Ser-106 is modified (phosphoserine). Tyr-114 is a binding site for an acyl-CoA. ANK repeat units follow at residues 191–220 (EGRA…DINC) and 224–253 (EGQT…DPTL).

In terms of assembly, monomer. In terms of tissue distribution, detected in placenta and spleen (at protein level). Detected in placenta, umbilical cord blood, CD34-positive hematopoietic progenitor cells and bone marrow.

It is found in the cytoplasm. Its subcellular location is the nucleus. In terms of biological role, binds long-chain acyl-coenzyme A molecules with a strong preference for unsaturated C18:1-CoA, lower affinity for unsaturated C20:4-CoA, and very weak affinity for saturated C16:0-CoA. Does not bind fatty acids. Plays a role in protein N-myristoylation. The protein is Acyl-CoA-binding domain-containing protein 6 (ACBD6) of Homo sapiens (Human).